Here is a 163-residue protein sequence, read N- to C-terminus: ATP synthase subunit b (163 aa).

Positions 1–11 (MLWKANVWVLG) are excised as a propeptide. Residues 16–36 (GISGGTIIYQLLMFIILLALL) form a helical membrane-spanning segment.

The protein belongs to the ATPase B chain family. F-type ATPases have 2 components, F(1) - the catalytic core - and F(0) - the membrane proton channel. F(1) has five subunits: alpha(3), beta(3), gamma(1), delta(1), epsilon(1). F(0) has three main subunits: a(1), b(2) and c(10-14). The alpha and beta chains form an alternating ring which encloses part of the gamma chain. F(1) is attached to F(0) by a central stalk formed by the gamma and epsilon chains, while a peripheral stalk is formed by the delta and b chains.

It localises to the cell membrane. Its function is as follows. F(1)F(0) ATP synthase produces ATP from ADP in the presence of a proton or sodium gradient. F-type ATPases consist of two structural domains, F(1) containing the extramembraneous catalytic core and F(0) containing the membrane proton channel, linked together by a central stalk and a peripheral stalk. During catalysis, ATP synthesis in the catalytic domain of F(1) is coupled via a rotary mechanism of the central stalk subunits to proton translocation. Functionally, component of the F(0) channel, it forms part of the peripheral stalk, linking F(1) to F(0). The protein is ATP synthase subunit b of Bacillus sp. (strain PS3).